Reading from the N-terminus, the 245-residue chain is 1-(5-phosphoribosyl)-5-[(5-phosphoribosylamino)methylideneamino] imidazole-4-carboxamide isomerase (245 aa).

Asp-11 (proton acceptor) is an active-site residue. Asp-132 functions as the Proton donor in the catalytic mechanism.

This sequence belongs to the HisA/HisF family.

It localises to the cytoplasm. It catalyses the reaction 1-(5-phospho-beta-D-ribosyl)-5-[(5-phospho-beta-D-ribosylamino)methylideneamino]imidazole-4-carboxamide = 5-[(5-phospho-1-deoxy-D-ribulos-1-ylimino)methylamino]-1-(5-phospho-beta-D-ribosyl)imidazole-4-carboxamide. It functions in the pathway amino-acid biosynthesis; L-histidine biosynthesis; L-histidine from 5-phospho-alpha-D-ribose 1-diphosphate: step 4/9. The sequence is that of 1-(5-phosphoribosyl)-5-[(5-phosphoribosylamino)methylideneamino] imidazole-4-carboxamide isomerase from Geobacillus kaustophilus (strain HTA426).